Consider the following 109-residue polypeptide: Nucleoid-associated protein APL_0075 (109 aa).

The tract at residues 1–21 is disordered; sequence MFGKGGLGGLMKQAQQMQERM. Residues 10–19 are compositionally biased toward low complexity; sequence LMKQAQQMQE.

The protein belongs to the YbaB/EbfC family. As to quaternary structure, homodimer.

The protein resides in the cytoplasm. It localises to the nucleoid. In terms of biological role, binds to DNA and alters its conformation. May be involved in regulation of gene expression, nucleoid organization and DNA protection. The chain is Nucleoid-associated protein APL_0075 from Actinobacillus pleuropneumoniae serotype 5b (strain L20).